We begin with the raw amino-acid sequence, 268 residues long: Calpain small subunit 1 (268 aa).

An N-acetylmethionine modification is found at methionine 1. At serine 6 the chain carries Phosphoserine. The EF-hand 1; atypical domain maps to 91-125 (EANESEEVRQFRRLFAQLAGDDMEVSATELMNILN). Ca(2+)-binding residues include alanine 109, aspartate 112, glutamate 114, glutamate 119, aspartate 137, aspartate 152, aspartate 154, threonine 156, lysine 158, and glutamate 163. 4 consecutive EF-hand domains span residues 139 to 172 (FGID…NNIK), 169 to 204 (NNIK…AGFH), 205 to 233 (LNEH…ISCL), and 234 to 268 (VRLD…TMYS). Lysine 179 bears the N6-acetyllysine mark. Ca(2+) is bound by residues aspartate 182, aspartate 184, serine 186, threonine 188, glutamate 193, and aspartate 225.

As to quaternary structure, homodimer or heterodimer of a large (catalytic) and a small (regulatory) subunit. In presence of calcium, the heterodimer dissociates.

It localises to the cytoplasm. It is found in the cell membrane. Regulatory subunit of the calcium-regulated non-lysosomal thiol-protease which catalyzes limited proteolysis of substrates involved in cytoskeletal remodeling and signal transduction. Essential for embryonic development. The polypeptide is Calpain small subunit 1 (CAPNS1) (Homo sapiens (Human)).